The sequence spans 424 residues: Exodeoxyribonuclease 7 large subunit (424 aa).

Belongs to the XseA family. In terms of assembly, heterooligomer composed of large and small subunits.

It localises to the cytoplasm. It carries out the reaction Exonucleolytic cleavage in either 5'- to 3'- or 3'- to 5'-direction to yield nucleoside 5'-phosphates.. In terms of biological role, bidirectionally degrades single-stranded DNA into large acid-insoluble oligonucleotides, which are then degraded further into small acid-soluble oligonucleotides. This is Exodeoxyribonuclease 7 large subunit from Cyanothece sp. (strain PCC 7425 / ATCC 29141).